Consider the following 200-residue polypeptide: Recombination protein RecR (200 aa).

The C4-type zinc finger occupies 58-73 (CQKCHNISDTTLCSIC). Residues 81-176 (GLICVVENIQ…KLSNIARGVA (96 aa)) form the Toprim domain.

The protein belongs to the RecR family.

May play a role in DNA repair. It seems to be involved in an RecBC-independent recombinational process of DNA repair. It may act with RecF and RecO. This chain is Recombination protein RecR, found in Amoebophilus asiaticus (strain 5a2).